Here is a 218-residue protein sequence, read N- to C-terminus: Ribosome maturation factor RimM (218 aa).

The PRC barrel domain occupies 141-214; it reads GELWWDRDLV…HIVVDPPPGL (74 aa).

This sequence belongs to the RimM family. In terms of assembly, binds ribosomal protein uS19.

Its subcellular location is the cytoplasm. Its function is as follows. An accessory protein needed during the final step in the assembly of 30S ribosomal subunit, possibly for assembly of the head region. Essential for efficient processing of 16S rRNA. May be needed both before and after RbfA during the maturation of 16S rRNA. It has affinity for free ribosomal 30S subunits but not for 70S ribosomes. This Parafrankia sp. (strain EAN1pec) protein is Ribosome maturation factor RimM.